Reading from the N-terminus, the 164-residue chain is Bacterial microcompartment shell protein EutK (164 aa).

One can recognise a BMC domain in the interval 4 to 88; the sequence is ALGLLEVDGM…PEEDTQWLIG (85 aa). Residues 108–164 form the EutK-Ctail domain; sequence EFAEALLALLASVRQGMTAGEVAAHFGWPLEQARNVLEQLFSDGALRKRSSRYRIKN.

It belongs to the bacterial microcompartments protein family. In terms of assembly, monomeric in solution.

The protein resides in the bacterial microcompartment. It participates in amine and polyamine degradation; ethanolamine degradation. Functionally, a component of the bacterial microcompartment (BMC) shell dedicated to ethanolamine degradation. Expression of eutK, eutL, eutM, eutN, eutS (eutSMNLK) in E.coli leads to formation of a single BMC. Coexpression of eutQ with eutSMNLK permits E.coli to make cells with more than one mobile BMC, as is usual in vivo. In terms of biological role, the ethanolamine (EA) catabolic bacterial microcompartment (BMC) probably concentrates low levels of ethanolamine catabolic enzymes, concentrates volatile reaction intermediates, keeps the level of toxic acetaldehyde low, generates enough acetyl-CoA to support cell growth, and maintains a pool of free coenzyme A (CoA) and NAD. Deletion of BMC genes (eutK, eutL, eutM) restores growth of eutD deletions, suggesting there are dedicated pools of coenzyme A (CoA) and NAD in the BMC. Its function is as follows. Expression of the eut operon allows this bacteria to use ethanolamine as a carbon, nitrogen and energy source. It relies on cobalamin (vitamin B12) both as a cofactor for the ethanolamine ammonia-lyase (EAL) activity and to induce the operon. EA enhances bacterial survival in macrophages in a concentration-dependent manner, suggesting it is an important nutrient during infection. This is Bacterial microcompartment shell protein EutK (eutK) from Salmonella typhimurium (strain LT2 / SGSC1412 / ATCC 700720).